Reading from the N-terminus, the 238-residue chain is Glycerol uptake facilitator protein 4 (238 aa).

The next 2 helical transmembrane spans lie at Ile-2–Val-22 and Ile-39–Val-59. The NPA 1 motif lies at Asn-62–Ala-64. 3 consecutive transmembrane segments (helical) span residues Phe-80–Ile-100, Phe-135–Val-155, and Pro-158–Gly-178. An NPA 2 motif is present at residues Asn-185–Ala-187. A helical membrane pass occupies residues Tyr-211 to Met-231.

Belongs to the MIP/aquaporin (TC 1.A.8) family.

It localises to the cell membrane. Transporter that facilitates the transmembrane diffusion of water, dihydroxyacetone, glycerol, urea, H(2)O(2) and D/L-lactic acid. Is involved in the cellular racemization of lactate and lactate metabolism, but has likely a more general physiological role. The transported molecule is indeed lactic acid and not the lactate anion, in agreement with the assumption that, with very few exceptions, MIPs (major intrinsic proteins) only facilitate the transport of uncharged solutes. This chain is Glycerol uptake facilitator protein 4, found in Lactiplantibacillus plantarum (strain ATCC BAA-793 / NCIMB 8826 / WCFS1) (Lactobacillus plantarum).